We begin with the raw amino-acid sequence, 595 residues long: Actin-histidine N-methyltransferase (595 aa).

Positions 1–22 (MGKKSRVKTQKSGTGATATVSP) are disordered. Positions 10-20 (QKSGTGATATV) are enriched in polar residues. Residues Arg-75, 104 to 106 (EGF), Arg-254, 275 to 279 (DMCNH), and 325 to 327 (SGF) each bind S-adenosyl-L-methionine. Positions 94-314 (EGFEMVNFKE…AGEQIYIFYG (221 aa)) constitute an SET domain. A Phosphoserine modification is found at Ser-513. A compositionally biased stretch (polar residues) spans 549–572 (ENGLVNGENSVPNGTRSENENLNQ). Residues 549-595 (ENGLVNGENSVPNGTRSENENLNQEESKRAVEDAKGSSSDNTAEVKE) form a disordered region. The segment covering 573–583 (EESKRAVEDAK) has biased composition (basic and acidic residues). Residues 584–595 (GSSSDNTAEVKE) show a composition bias toward polar residues.

The protein belongs to the class V-like SAM-binding methyltransferase superfamily. SETD3 actin-histidine methyltransferase family. As to quaternary structure, interacts with MYOD1. Post-translationally, phosphorylated by GSK3B, which is required for recognition by the SCF(FBXW7) complex and subsequent degradation. Ubiquitinated by the SCF(FBXW7) complex following phosphorylation by GSK3B, leading to its degradation by the proteasome.

It is found in the cytoplasm. It localises to the nucleus. The enzyme catalyses L-histidyl-[protein] + S-adenosyl-L-methionine = N(tele)-methyl-L-histidyl-[protein] + S-adenosyl-L-homocysteine + H(+). Functionally, protein-histidine N-methyltransferase that specifically mediates 3-methylhistidine (tele-methylhistidine) methylation of actin at 'His-73'. Histidine methylation of actin is required for smooth muscle contraction of the laboring uterus during delivery. Does not have protein-lysine N-methyltransferase activity and probably only catalyzes histidine methylation of actin. The sequence is that of Actin-histidine N-methyltransferase from Papio anubis (Olive baboon).